The sequence spans 235 residues: MSTEQDIKTEEQIPLTYAAVAAPTVQTEGEAVVAPEEPKPKKNWFTFGKKKAAPTDETNIEEGGAPGDEPVKEKKEKKCWWSRCQKGEGEQKEENIAIGVDLVNRDANSMNNHVQLNFEDIFGEADSQHSWDCVWRLNHTVFTAVRLFIYRLVSLLALPFTIIFAIFFGLLASINVFIIVPLGKLLSIPGTLLAKLWNWLIHAIFDPIASAVGLIFSNFNIRKYGINQETTAPCV.

Residues 1-161 (MSTEQDIKTE…LVSLLALPFT (161 aa)) are Cytoplasmic-facing. Positions 29-72 (GEAVVAPEEPKPKKNWFTFGKKKAAPTDETNIEEGGAPGDEPVK) are disordered. The helical intramembrane region spans 162–182 (IIFAIFFGLLASINVFIIVPL). Residues 183–235 (GKLLSIPGTLLAKLWNWLIHAIFDPIASAVGLIFSNFNIRKYGINQETTAPCV) lie on the Cytoplasmic side of the membrane. Residue Cys-234 is the site of S-palmitoyl cysteine attachment.

The protein belongs to the caveolin family. In terms of assembly, homooligomer containing 14-16 monomers per oligomer.

The protein resides in the golgi apparatus membrane. Its subcellular location is the cell membrane. It is found in the membrane. The protein localises to the caveola. May act as a scaffolding protein within caveolar membranes. Interacts directly with G-protein alpha subunits and can functionally regulate their activity. This is Caveolin-1 (cav-1) from Caenorhabditis elegans.